The following is a 503-amino-acid chain: Maturase K (503 aa).

The protein belongs to the intron maturase 2 family. MatK subfamily.

Its subcellular location is the plastid. It is found in the chloroplast. Functionally, usually encoded in the trnK tRNA gene intron. Probably assists in splicing its own and other chloroplast group II introns. The protein is Maturase K of Vicia sativa (Spring vetch).